Here is a 216-residue protein sequence, read N- to C-terminus: Probable inactive E3 ubiquitin-protein ligase SINAT6 (216 aa).

An SIAH-type zinc finger spans residues 5-74 (INDLQVESRV…LLLHLRNDHN (70 aa)).

It belongs to the SINA (Seven in absentia) family. Homodimer. Interacts with SINAT1, SINAT2, SINAT3, SINAT4 and SINAT5. Interacts with ATG6 and TRAF1A. Expressed in roots, rosette leaves, cauline leaves, guard cells and flowers.

It is found in the cytoplasm. The protein localises to the nucleus. Functionally, probable inactive E3 ubiquitin-protein ligase that plays a role in regulation of autophagy. Upon starvation, involved in maintaining ATG6 homeostasis by competitively associating with ATG6, a component of the autophagosome complex. Acts as a positive regulator of drought stress response. Functions as a positive regulator of abscisic acid-mediated stomatal closure. The sequence is that of Probable inactive E3 ubiquitin-protein ligase SINAT6 from Arabidopsis thaliana (Mouse-ear cress).